Consider the following 126-residue polypeptide: Fluoride-specific ion channel FluC 2 (126 aa).

4 consecutive transmembrane segments (helical) span residues 11–31 (VLLIGLGGFLGAVCRFLICEH), 36–56 (LGILSVNVLGSFMLGMIMYDA), 69–89 (AFGTGFIGAFTTFSTFAVQSF), and 93–113 (FLPALGNISANLFLTLTGVFF). Residues G76 and T79 each coordinate Na(+).

The protein belongs to the fluoride channel Fluc/FEX (TC 1.A.43) family.

Its subcellular location is the cell membrane. It catalyses the reaction fluoride(in) = fluoride(out). Its activity is regulated as follows. Na(+) is not transported, but it plays an essential structural role and its presence is essential for fluoride channel function. Fluoride-specific ion channel. Important for reducing fluoride concentration in the cell, thus reducing its toxicity. The chain is Fluoride-specific ion channel FluC 2 from Methanosarcina mazei (strain ATCC BAA-159 / DSM 3647 / Goe1 / Go1 / JCM 11833 / OCM 88) (Methanosarcina frisia).